Here is a 399-residue protein sequence, read N- to C-terminus: Tyrosine--tRNA ligase (399 aa).

A 'HIGH' region motif is present at residues 42–51; it reads PTAPDLHLGH. The 'KMSKS' region signature appears at 226–230; it reads KMSKS. Lys-229 contributes to the ATP binding site. The S4 RNA-binding domain occupies 336-396; sequence MPIAAVLNKA…GRKAFARITL (61 aa).

This sequence belongs to the class-I aminoacyl-tRNA synthetase family. TyrS type 2 subfamily. Homodimer.

The protein localises to the cytoplasm. It carries out the reaction tRNA(Tyr) + L-tyrosine + ATP = L-tyrosyl-tRNA(Tyr) + AMP + diphosphate + H(+). Functionally, catalyzes the attachment of tyrosine to tRNA(Tyr) in a two-step reaction: tyrosine is first activated by ATP to form Tyr-AMP and then transferred to the acceptor end of tRNA(Tyr). The polypeptide is Tyrosine--tRNA ligase (Pseudomonas fluorescens (strain ATCC BAA-477 / NRRL B-23932 / Pf-5)).